A 350-amino-acid polypeptide reads, in one-letter code: Phosphate acyltransferase (350 aa).

Belongs to the PlsX family. Homodimer. Probably interacts with PlsY.

Its subcellular location is the cytoplasm. The enzyme catalyses a fatty acyl-[ACP] + phosphate = an acyl phosphate + holo-[ACP]. It functions in the pathway lipid metabolism; phospholipid metabolism. Functionally, catalyzes the reversible formation of acyl-phosphate (acyl-PO(4)) from acyl-[acyl-carrier-protein] (acyl-ACP). This enzyme utilizes acyl-ACP as fatty acyl donor, but not acyl-CoA. This Magnetococcus marinus (strain ATCC BAA-1437 / JCM 17883 / MC-1) protein is Phosphate acyltransferase.